A 394-amino-acid chain; its full sequence is p-hydroxybenzoate hydroxylase (394 aa).

Residues Ser13, Glu32, 42-47, and Gln102 each bind FAD; that span reads RIRAGV. Substrate is bound by residues Tyr201, 212–214, and Tyr222; that span reads SQR. Residue Asp286 participates in FAD binding. A substrate-binding site is contributed by Pro293. An FAD-binding site is contributed by 299 to 300; that stretch reads LN.

This sequence belongs to the aromatic-ring hydroxylase family. Homodimer. FAD is required as a cofactor.

It catalyses the reaction 4-hydroxybenzoate + NADPH + O2 + H(+) = 3,4-dihydroxybenzoate + NADP(+) + H2O. Its pathway is aromatic compound metabolism; benzoate degradation via hydroxylation; 3,4-dihydroxybenzoate from benzoate: step 2/2. In terms of biological role, catalyzes the incorporation of an atom of dioxygen into p-hydroxybenzoate (p-OHB) to form 3,4-dihydroxybenzoate (3,4DOHB). The reaction occurs in two parts: reduction of the flavin adenine dinucleotide (FAD) in the enzyme by reduced nicotinamide adenine dinucleotide phosphate (NADPH) in response to binding p-hydroxybenzoate to the enzyme and oxidation of reduced FAD with oxygen to form a hydroperoxide, which then oxygenates p-hydroxybenzoate. The polypeptide is p-hydroxybenzoate hydroxylase (Pseudomonas aeruginosa (strain ATCC 15692 / DSM 22644 / CIP 104116 / JCM 14847 / LMG 12228 / 1C / PRS 101 / PAO1)).